Reading from the N-terminus, the 156-residue chain is Ribosome maturation factor RimP (156 aa).

It belongs to the RimP family.

It is found in the cytoplasm. Required for maturation of 30S ribosomal subunits. This is Ribosome maturation factor RimP from Bacillus cereus (strain G9842).